Consider the following 308-residue polypeptide: D-alanine--D-alanine ligase B (308 aa).

The ATP-grasp domain occupies 102 to 302; sequence KKIVKTVGVP…FGELLSWMVE (201 aa). 128–183 is an ATP binding site; it reads PMKPPYVIKPVNEGSSFGVVIVSEGQSHPPQVVGSSEWKYGDTVMVERYIHGRELT. Residues aspartate 252, glutamate 269, and asparagine 271 each contribute to the Mg(2+) site.

It belongs to the D-alanine--D-alanine ligase family. Requires Mg(2+) as cofactor. It depends on Mn(2+) as a cofactor.

The protein resides in the cytoplasm. The enzyme catalyses 2 D-alanine + ATP = D-alanyl-D-alanine + ADP + phosphate + H(+). It functions in the pathway cell wall biogenesis; peptidoglycan biosynthesis. Its function is as follows. Cell wall formation. The polypeptide is D-alanine--D-alanine ligase B (Mesorhizobium japonicum (strain LMG 29417 / CECT 9101 / MAFF 303099) (Mesorhizobium loti (strain MAFF 303099))).